Here is a 318-residue protein sequence, read N- to C-terminus: Methionyl-tRNA formyltransferase (318 aa).

Residue 120 to 123 coordinates (6S)-5,6,7,8-tetrahydrofolate; it reads SLLP.

Belongs to the Fmt family.

The enzyme catalyses L-methionyl-tRNA(fMet) + (6R)-10-formyltetrahydrofolate = N-formyl-L-methionyl-tRNA(fMet) + (6S)-5,6,7,8-tetrahydrofolate + H(+). Its function is as follows. Attaches a formyl group to the free amino group of methionyl-tRNA(fMet). The formyl group appears to play a dual role in the initiator identity of N-formylmethionyl-tRNA by promoting its recognition by IF2 and preventing the misappropriation of this tRNA by the elongation apparatus. In Variovorax paradoxus (strain S110), this protein is Methionyl-tRNA formyltransferase.